A 503-amino-acid chain; its full sequence is Transcription termination/antitermination protein NusA (503 aa).

The 65-residue stretch at 139 to 203 (GDIINGIVKR…KGPQIFLSRV (65 aa)) folds into the S1 motif domain. The KH domain occupies 308–378 (SHKVEVVVSQ…LDVEEVIGQL (71 aa)).

This sequence belongs to the NusA family. In terms of assembly, monomer. Binds directly to the core enzyme of the DNA-dependent RNA polymerase and to nascent RNA.

The protein localises to the cytoplasm. Functionally, participates in both transcription termination and antitermination. In Rickettsia prowazekii (strain Madrid E), this protein is Transcription termination/antitermination protein NusA.